A 605-amino-acid chain; its full sequence is Replication protein E1 (605 aa).

A Nuclear localization signal motif is present at residues 76–78 (KRK). Ser81 and Ser89 each carry phosphoserine; by host. The short motif at 88–97 (LSPRLESISL) is the Nuclear export signal element. The segment at 145–308 (HLGTVDIHYT…TIVGHQSTEA (164 aa)) is DNA-binding region. The region spanning 407–557 (VNVIMFLAAL…FPMKPDNTPE (151 aa)) is the SF3 helicase domain. 433 to 440 (GPPNTGKS) serves as a coordination point for ATP. A Glycyl lysine isopeptide (Lys-Gly) (interchain with G-Cter in SUMO) cross-link involves residue Lys514. The tract at residues 580 to 605 (DQEDEGENGESQQAFQCSARSANEHL) is disordered. Residues 588-605 (GESQQAFQCSARSANEHL) are compositionally biased toward polar residues.

Belongs to the papillomaviridae E1 protein family. Can form hexamers. Interacts with E2 protein; this interaction increases E1 DNA binding specificity. Interacts with host DNA polymerase subunit POLA2. Interacts with host single stranded DNA-binding protein RPA1. Interacts with host TOP1; this interaction stimulates the enzymatic activity of TOP1. Phosphorylated. Post-translationally, sumoylated.

It localises to the host nucleus. It catalyses the reaction Couples ATP hydrolysis with the unwinding of duplex DNA by translocating in the 3'-5' direction.. The enzyme catalyses ATP + H2O = ADP + phosphate + H(+). In terms of biological role, ATP-dependent DNA 3'-5' helicase required for initiation of viral DNA replication. It forms a complex with the viral E2 protein. The E1-E2 complex binds to the replication origin which contains binding sites for both proteins. During the initial step, a dimer of E1 interacts with a dimer of protein E2 leading to a complex that binds the viral origin of replication with high specificity. Then, a second dimer of E1 displaces the E2 dimer in an ATP-dependent manner to form the E1 tetramer. Following this, two E1 monomers are added to each half of the site, which results in the formation of two E1 trimers on the viral ori. Subsequently, two hexamers will be created. The double hexamer acts as a bi-directional helicase machinery and unwinds the viral DNA and then recruits the host DNA polymerase to start replication. The chain is Replication protein E1 from Homo sapiens (Human).